The following is a 602-amino-acid chain: MKHAKQIAEHATIQSFLNCYLRETGSGEWITEDKRIEDIFYHLFQRDTCSTYLCCRLSAQNITLYGEVIYKSPTDRHLFGEQFYYQMGDSNSVMKADYVTVITFLIKEMSINYGEGTNPAELMLRVIRSCQNIEEFTKERKEDTSALYGFHTSFIEAEQSLLFGHLTHPTPKSRQGILEWKSAMYSPELKGECQLHYFRAHKSIVNEKSLLLDSTTVILKEELRNDEMVSKEFISKYCNEDEYSLLPIHPLQAEWLLHQPYVQDWIEQGVLEYIGPTGKCYMATSSLRTLYHPDAKYMLKFSFPVKVTNSMRINKLKELESGLEGKAMLNTAIGEVLEKFPGFDFICDPAFITLNYGTQESGFEVIIRENPFYSEHADDATLIAGLVQDAIPGERTRLSNIIHRLADLESRSCEEVSLEWFRRYMNISLKPMVWMYLQYGVALEAHQQNSVVQLKDGYPVKYYFRDNQGFYFCNSMKEMLNNELAGIGERTGNLYDDYIVDERFRYYLIFNHMFGLINGFGTAGLIREEILLTELRTVLESFLPYNREPSTFLRELLEEDKLACKANLLTRFFDVDELSNPLEQAIYVQVQNPLVREVAVRS.

ATP-binding positions include S286–R288, K300, and R312.

It belongs to the IucA/IucC family.

The catalysed reaction is spermidine + citrate + ATP = N(8)-citryl-spermidine + AMP + diphosphate + H(+). It functions in the pathway siderophore biosynthesis; petrobactin biosynthesis. Its function is as follows. Involved in the biosynthesis of petrobactin, a catecholate siderophore that functions in both iron acquisition and virulence. Catalyzes the ATP-dependent condensation of citric acid and spermidine to form N(8)-citryl-spermidine. It can also catalyze the condensation of several di- and triamine analogs of spermidine with citric acid and the condensation of the citric acid analog tricarballylic acid with spermidine. Required for growth in iron-depleted medium and for full virulence in a mouse model of infection. The sequence is that of Spermidine-citrate ligase from Bacillus anthracis.